The primary structure comprises 284 residues: 4-diphosphocytidyl-2-C-methyl-D-erythritol kinase (284 aa).

Lys14 is a catalytic residue. Residue 98 to 108 coordinates ATP; that stretch reads PMGGGLGGGSS. The active site involves Asp140.

It belongs to the GHMP kinase family. IspE subfamily.

It catalyses the reaction 4-CDP-2-C-methyl-D-erythritol + ATP = 4-CDP-2-C-methyl-D-erythritol 2-phosphate + ADP + H(+). It functions in the pathway isoprenoid biosynthesis; isopentenyl diphosphate biosynthesis via DXP pathway; isopentenyl diphosphate from 1-deoxy-D-xylulose 5-phosphate: step 3/6. In terms of biological role, catalyzes the phosphorylation of the position 2 hydroxy group of 4-diphosphocytidyl-2C-methyl-D-erythritol. This chain is 4-diphosphocytidyl-2-C-methyl-D-erythritol kinase, found in Shewanella baltica (strain OS195).